The sequence spans 129 residues: Small ribosomal subunit protein uS11 (129 aa).

Belongs to the universal ribosomal protein uS11 family. As to quaternary structure, part of the 30S ribosomal subunit. Interacts with proteins S7 and S18. Binds to IF-3.

Located on the platform of the 30S subunit, it bridges several disparate RNA helices of the 16S rRNA. Forms part of the Shine-Dalgarno cleft in the 70S ribosome. This Methylocella silvestris (strain DSM 15510 / CIP 108128 / LMG 27833 / NCIMB 13906 / BL2) protein is Small ribosomal subunit protein uS11.